The sequence spans 123 residues: Large ribosomal subunit protein uL24 (123 aa).

Positions 100 to 123 (RRPDGSTYKAERSVRISRKTGKEI) are disordered.

It belongs to the universal ribosomal protein uL24 family. In terms of assembly, part of the 50S ribosomal subunit.

Its function is as follows. One of two assembly initiator proteins, it binds directly to the 5'-end of the 23S rRNA, where it nucleates assembly of the 50S subunit. In terms of biological role, one of the proteins that surrounds the polypeptide exit tunnel on the outside of the subunit. This Nocardioides sp. (strain ATCC BAA-499 / JS614) protein is Large ribosomal subunit protein uL24.